We begin with the raw amino-acid sequence, 192 residues long: Large ribosomal subunit protein bL9 (192 aa).

A disordered region spans residues 173 to 192 (ALRPEDFFDPEADGVDEDEA). Acidic residues predominate over residues 179–192 (FFDPEADGVDEDEA).

It belongs to the bacterial ribosomal protein bL9 family.

Binds to the 23S rRNA. The polypeptide is Large ribosomal subunit protein bL9 (rplI) (Rhizobium leguminosarum bv. trifolii).